Reading from the N-terminus, the 160-residue chain is Lymphocyte antigen 96 (160 aa).

The N-terminal stretch at 1–16 (MLPFILFSTLLPLIFT) is a signal peptide. Cystine bridges form between Cys-25/Cys-51, Cys-37/Cys-148, and Cys-95/Cys-105. N-linked (GlcNAc...) asparagine glycosylation is found at Asn-26, Asn-77, and Asn-101. The interval 119 to 123 (FSFKG) is interaction with lipopolysaccharide. N-linked (GlcNAc...) asparagine glycosylation is present at Asn-150.

As to quaternary structure, heterogeneous homomer formed from homodimers; disulfide-linked. Belongs to the lipopolysaccharide (LPS) receptor, a multi-protein complex containing at least CD14, LY96 and TLR4. Binds to the extracellular domains of TLR2 and TLR4. Ligand binding induces interaction with TLR4 and oligomerization of the complex. In terms of processing, N-glycosylated.

The protein resides in the secreted. The protein localises to the extracellular space. Binds bacterial lipopolysaccharide (LPS). Cooperates with TLR4 in the innate immune response to bacterial lipopolysaccharide (LPS), and with TLR2 in the response to cell wall components from Gram-positive and Gram-negative bacteria. Enhances TLR4-dependent activation of NF-kappa-B. Cells expressing both LY96 and TLR4, but not TLR4 alone, respond to LPS. This Cricetulus griseus (Chinese hamster) protein is Lymphocyte antigen 96 (LY96).